A 278-amino-acid polypeptide reads, in one-letter code: tRNA pseudouridine synthase A (278 aa).

Aspartate 52 acts as the Nucleophile in catalysis. Tyrosine 111 is a binding site for substrate. Over residues 253–264 the composition is skewed to low complexity; it reads AKAGPLEAAPLG. The disordered stretch occupies residues 253-278; that stretch reads AKAGPLEAAPLGEAPLKEATLKEDWR. Over residues 267–278 the composition is skewed to basic and acidic residues; that stretch reads PLKEATLKEDWR.

This sequence belongs to the tRNA pseudouridine synthase TruA family. In terms of assembly, homodimer.

The catalysed reaction is uridine(38/39/40) in tRNA = pseudouridine(38/39/40) in tRNA. Formation of pseudouridine at positions 38, 39 and 40 in the anticodon stem and loop of transfer RNAs. This Rhodospirillum rubrum (strain ATCC 11170 / ATH 1.1.1 / DSM 467 / LMG 4362 / NCIMB 8255 / S1) protein is tRNA pseudouridine synthase A.